The chain runs to 491 residues: [Pyruvate dehydrogenase (acetyl-transferring)] kinase 2, mitochondrial (491 aa).

In terms of domain architecture, Histidine kinase spans 153 to 480 (PTIRTLEDAS…DVVLKLGNLM (328 aa)). ATP is bound by residues 300 to 307 (EILRNTYE), D341, 359 to 360 (SK), and 383 to 446 (DEVH…GIGL).

Belongs to the PDK/BCKDK protein kinase family. As to quaternary structure, interacts with PKP1.

It localises to the mitochondrion matrix. It carries out the reaction L-seryl-[pyruvate dehydrogenase E1 alpha subunit] + ATP = O-phospho-L-seryl-[pyruvate dehydrogenase E1 alpha subunit] + ADP + H(+). Inhibits the mitochondrial pyruvate dehydrogenase complex by phosphorylation of the E1 alpha subunit (PDA1), thus contributing to the regulation of glucose metabolism. The polypeptide is [Pyruvate dehydrogenase (acetyl-transferring)] kinase 2, mitochondrial (Saccharomyces cerevisiae (strain ATCC 204508 / S288c) (Baker's yeast)).